We begin with the raw amino-acid sequence, 252 residues long: Osmotin-like protein (252 aa).

Positions 1-24 (MASSSAKILLPLSLLFTLLSLSQS) are cleaved as a signal peptide.

The protein resides in the secreted. It localises to the cell wall. The polypeptide is Osmotin-like protein (Solanum lycopersicum (Tomato)).